The primary structure comprises 287 residues: Probable ribosomal RNA small subunit methyltransferase A (287 aa).

Residues histidine 29, leucine 31, glycine 56, glutamate 77, aspartate 102, and asparagine 117 each contribute to the S-adenosyl-L-methionine site.

Belongs to the class I-like SAM-binding methyltransferase superfamily. rRNA adenine N(6)-methyltransferase family. RsmA subfamily.

Its subcellular location is the cytoplasm. Its function is as follows. Specifically dimethylates two adjacent adenosines in the loop of a conserved hairpin near the 3'-end of 16S rRNA in the 30S particle. May play a critical role in biogenesis of 30S subunits. This chain is Probable ribosomal RNA small subunit methyltransferase A, found in Methanosarcina barkeri (strain Fusaro / DSM 804).